Here is a 415-residue protein sequence, read N- to C-terminus: MFADLDYDIEEDKLGIPTVPGKVTLQKDAQNLIGISIGGGAQYCPCLYIVQVFDNTPAALDGTVAAGDEITGVNGRSIKGKTKVEVAKMIQEVKGEVTIHYNKLQADPKQGMSLDIVLKKVKHRLVENMSSGTADALGLSRAILCNDGLVKRLEELERTAELYKGMTEHTKNLLRVFYELSQTHRAFGDVFSVIGVREPQPAASEAFVKFADAHRSIEKFGIRLLKTIKPMLTDLNTYLNKAIPDTRLTIKKYLDVKFEYLSYCLKVKEMDDEEYSCIALGEPLYRVSTGNYEYRLILRCRQEARARFSQMRKDVLEKMELLDQKHVQDIVFQLQRLVSTMSKYYNDCYAVLRDADVFPIEVDLAHTTLAYGLNQEEFTDGEEEEEEEDTAAGEPSRDTRGAAGPLDKGGSWCDS.

One can recognise a PDZ domain in the interval 22 to 105 (KVTLQKDAQN…EVTIHYNKLQ (84 aa)). 2 residues coordinate Zn(2+): cysteine 44 and cysteine 46. Position 82 is a phosphothreonine (threonine 82). Residues 144–357 (LCNDGLVKRL…CYAVLRDADV (214 aa)) enclose the AH domain. The segment at 376 to 415 (EEFTDGEEEEEEEDTAAGEPSRDTRGAAGPLDKGGSWCDS) is disordered. Over residues 377 to 391 (EFTDGEEEEEEEDTA) the composition is skewed to acidic residues. A lipid anchor (S-palmitoyl cysteine; by DHHC8) is attached at cysteine 413.

Monomer and homodimer. Interacts with CXADR. Interacts presynaptically with the glutamate receptors GRIA2, GRIA3, GRIK3, isoform 3 of GRIA4, isoform A of GRM4, GRM7 and GRM8; with NAPA and NAPB; and with BTG2. The interaction with NAPA and NAPB disrupts the interaction with GRIA2, conducting to the internalization of GRIA2. Interacts with PRKCA; with the amine transporters SLC6A2 and SLC6A3; with the channels ASIC1 and ASIC2; with the GTP-binding proteins ARF1 and ARF3; with the ephrin receptor tyrosine kinases EPHA7, EPHB1 and EPHB2; with ERBB2 and through its PDZ domain with the C-terminal tail of PRLHR. Interacts with UNC5A. Interacts (via AH domain) with NCS1/FREQ; in a calcium-dependent manner. Interacts with F-actin and associates with the ARP2/3 complex. Interacts (via PDZ domain) with ARF1 (activated); the interaction blocks Arp2/3 complex inhibition. Interacts with SORCS3. In terms of processing, phosphorylation at Thr-82 appears to inhibit the interaction with AMPA receptors. Post-translationally, palmitoylation on Cys-413 is essential for long-term synaptic depression (LTD).

It localises to the cytoplasm. The protein localises to the perinuclear region. The protein resides in the membrane. Its subcellular location is the postsynaptic density. It is found in the synapse. It localises to the synaptosome. The protein localises to the cytoskeleton. Its function is as follows. Probable adapter protein that bind to and organize the subcellular localization of a variety of membrane proteins containing some PDZ recognition sequence. Involved in the clustering of various receptors, possibly by acting at the receptor internalization level. Plays a role in synaptic plasticity by regulating the trafficking and internalization of AMPA receptors. May be regulated upon PRKCA activation. May regulate ASIC1/ASIC3 channel. Regulates actin polymerization by inhibiting the actin-nucleating activity of the Arp2/3 complex; the function is competitive with nucleation promoting factors and is linked to neuronal morphology regulation and AMPA receptor (AMPAR) endocytosis. Via interaction with the Arp2/3 complex involved in regulation of synaptic plasicity of excitatory synapses and required for spine shrinkage during long-term depression (LTD). Involved in regulation of astrocyte morphology, antagonistic to Arp2/3 complex activator WASL/N-WASP function. This chain is PRKCA-binding protein (PICK1), found in Macaca fascicularis (Crab-eating macaque).